The following is a 495-amino-acid chain: Heterogeneous nuclear ribonucleoprotein Q (495 aa).

The span at 1 to 10 (MSDARDNDDR) shows a compositional bias: basic and acidic residues. Residues 1–101 (MSDARDNDDR…KPPSPIDDED (101 aa)) are disordered. Composition is skewed to acidic residues over residues 11–46 (VDFE…DDDV) and 67–101 (MEDV…DDED). RRM domains follow at residues 116–194 (SEVF…LSET), 196–278 (NRLF…WADP), and 292–368 (KALY…LAKP). A disordered region spans residues 452-495 (MPMAAAPPQRPRRNDRNNGSSGGSGRDNSHEHDGNRGGRRYRPY). The span at 478–487 (DNSHEHDGNR) shows a compositional bias: basic and acidic residues.

As to quaternary structure, interacts with LHP1 in the nucleus on a common set of chromatin regions. As to expression, predominantly expressed in vascular and meristematic tissues. Expressed throughout development in seedlings, roots, leaves, floral buds and siliques.

The protein localises to the nucleus. Its subcellular location is the cytoplasm. The protein resides in the microsome. Its function is as follows. Transcriptional activator that binds DNA on GAGA-like motif and 5'-(C/G)ACGTG(G/T)C(A/G)-3' consensus motif in the promoters of target genes. Component of ribonucleosomes, which are complexes of at least 20 other different heterogeneous nuclear ribonucleoproteins (hnRNP). hnRNP play an important role in processing of precursor mRNA in the nucleus. Required during flower development and for cell fate determination. Acts both as an antagonist and as a promoter of polycomb LHP1 gene regulation activity, depending of target genes, to regulate the transcription of stress-responsive and flowering genes. May regulate histone H3 trimethylation on lysine 27 (H3K27me3). Recognizes and binds histone H3 tails methylated at 'Lys-4' (H3K4me) and acetylated at 'Lys-9' (H3K9ac), leading to epigenetic activation. When in complex with LHP1, recognizes and binds histone H3 tails methylated at 'Lys-4' (H3K4me) and 'Lys-27' (H3K27me), mostly corresponding to stress-responsive genes. May function as a suppressor of cell-autonomous immune responses involving glucosinolates, salicylic acid (SA) and jasmonic acid (JA) pathways toward pathogenic bacteria and fungi. This chain is Heterogeneous nuclear ribonucleoprotein Q, found in Arabidopsis thaliana (Mouse-ear cress).